Reading from the N-terminus, the 305-residue chain is GTPase Era (305 aa).

Residues 11–181 form the Era-type G domain; the sequence is RSGFVSFVGR…IKVMTDLLPE (171 aa). The tract at residues 19–26 is G1; that stretch reads GRPNTGKS. 19–26 is a GTP binding site; sequence GRPNTGKS. The interval 45 to 49 is G2; it reads ETTRH. Residues 66–69 form a G3 region; it reads DTPG. Residues 66–70 and 130–133 contribute to the GTP site; these read DTPGL and TKAD. Residues 130-133 are G4; the sequence is TKAD. The G5 stretch occupies residues 160–162; it reads VSS. The KH type-2 domain occupies 212 to 291; the sequence is LKNELPHSVA…FLDLRIKVLK (80 aa).

It belongs to the TRAFAC class TrmE-Era-EngA-EngB-Septin-like GTPase superfamily. Era GTPase family. As to quaternary structure, monomer.

The protein localises to the cytoplasm. Its subcellular location is the cell membrane. Its function is as follows. An essential GTPase that binds both GDP and GTP, with rapid nucleotide exchange. Plays a role in 16S rRNA processing and 30S ribosomal subunit biogenesis and possibly also in cell cycle regulation and energy metabolism. This chain is GTPase Era, found in Corynebacterium glutamicum (strain ATCC 13032 / DSM 20300 / JCM 1318 / BCRC 11384 / CCUG 27702 / LMG 3730 / NBRC 12168 / NCIMB 10025 / NRRL B-2784 / 534).